The chain runs to 431 residues: Extensin-3 (431 aa).

A signal peptide spans M1–A27. 3 consecutive repeat copies span residues S33 to Y41, S49 to H55, and S56 to H63. The segment at S33–Y384 is 13 X 9 AA repeats of S-P-P-P-P-V-K-H-Y. A disordered region spans residues T42 to P408. Residues S49 to P59 show a composition bias toward pro residues. Positions S49–H391 are 13 X 7 AA repeats of S-P-P-P-V-Y-H. Residues S56 to H371 form a 12 X 8 AA repeats of S-P-P-P-P-K-K-H region. Residues Y64–K67 are isodityrosine cross-linking. 3 repeat units span residues S68–Y76, S77–H83, and S84–H91. Residues S68–P87 are compositionally biased toward pro residues. Residues Y92 to K95 are isodityrosine cross-linking. 3 repeat units span residues S96 to Y104, S105 to H111, and S112 to H119. The segment covering S96–P115 has biased composition (pro residues). The interval Y120 to K123 is isodityrosine cross-linking. 3 consecutive repeat copies span residues S124–Y132, S133–H139, and S140–H147. Residues S124–P143 are compositionally biased toward pro residues. Residues Y148–K151 form an isodityrosine cross-linking region. 3 consecutive repeat copies span residues S152–Y160, S161–H167, and S168–H175. Residues S152 to P171 are compositionally biased toward pro residues. The interval Y176 to K179 is isodityrosine cross-linking. 3 repeat units span residues S180–Y188, S189–H195, and S196–H203. Residues S180 to P199 show a composition bias toward pro residues. The isodityrosine cross-linking stretch occupies residues Y204–K207. 3 repeat units span residues S208–Y216, S217–H223, and S224–H231. Residues S208 to P227 are compositionally biased toward pro residues. The interval Y232–K235 is isodityrosine cross-linking. 3 repeat units span residues S236–Y244, S245–H251, and S252–H259. Over residues S236 to P255 the composition is skewed to pro residues. The segment at Y260–K263 is isodityrosine cross-linking. 3 tandem repeats follow at residues S264–Y272, S273–H279, and S280–H287. Over residues S264–P283 the composition is skewed to pro residues. The interval Y288–K291 is isodityrosine cross-linking. A run of 3 repeats spans residues S292–Y300, S301–H307, and S308–H315. A compositionally biased stretch (pro residues) spans S292–P311. The segment at Y316–K319 is isodityrosine cross-linking. A run of 3 repeats spans residues S320–Y328, S329–H335, and S336–H343. Positions S320–P339 are enriched in pro residues. The isodityrosine cross-linking stretch occupies residues Y344 to K347. 3 consecutive repeat copies span residues S348–Y356, S357–H363, and S364–H371. The segment covering S348–P367 has biased composition (pro residues). The tract at residues Y372–K375 is isodityrosine cross-linking. 2 consecutive repeat copies span residues S376–Y384 and S385–H391. Residues S376–P395 are compositionally biased toward pro residues. 2 isodityrosine cross-linking regions span residues Y400–K403 and Y420–K423.

It belongs to the extensin family. Post-translationally, the proline residues of the Ser-Pro(3) repeats are hydroxylated and then O-glycosylated (arabinosylation) by HPAT1, HPAT2 and HPAT3. Around 20% of Hyp units are in the nonglycosylated form. The Ser residues are O-galactosylated. The lack of Ser-O-galactosylation does not affect Hyp-O-arabinosylation, but both types of O-glycosylation are central for the functionality of the protein. Correct Hyp-O-arabinosylation appears to be responsible for generating a bend on the EXT3 backbone around a YVY motif, which may represent a better scenario for Tyr intramolecular cross-links (isodityrosine type). In terms of processing, synthetised as soluble proteins which become insolubilised in the cell wall through the intermolecular cross-linking of Tyr on adjacent monomers. Isodityrosine (IDT) stabilizes and makes rigid the part of the polypeptide where IDT functional sites are present. As to expression, predominantly expressed in the roots.

It localises to the secreted. It is found in the primary cell wall. In terms of biological role, structural component which strengthens the primary cell wall. Forms dendritic structures indicating a propensity for self-assembly through tyrosine cross-linking. Forms intermolecular cross-links exclusively by pulcherosine (three Tyr). Scaffold formation requires an unobstructed C-terminus of EXT3. Required for the correct positioning of the cell plate during cytokinesis in cells of the developing embryo. Extensins contain a characteristic repeat of the pentapeptide Ser-Pro(4). For this particular extensin, a typical repeat of Ser-Pro(3) is found. This chain is Extensin-3, found in Arabidopsis thaliana (Mouse-ear cress).